The sequence spans 212 residues: Uracil phosphoribosyltransferase (212 aa).

Residues Arg-78, Arg-103, and 130–138 (DPMLATGGS) contribute to the 5-phospho-alpha-D-ribose 1-diphosphate site. Residues Ile-193 and 198 to 200 (GDA) each bind uracil. 5-phospho-alpha-D-ribose 1-diphosphate is bound at residue Asp-199.

The protein belongs to the UPRTase family. Requires Mg(2+) as cofactor.

The enzyme catalyses UMP + diphosphate = 5-phospho-alpha-D-ribose 1-diphosphate + uracil. Its pathway is pyrimidine metabolism; UMP biosynthesis via salvage pathway; UMP from uracil: step 1/1. With respect to regulation, allosterically activated by GTP. In terms of biological role, catalyzes the conversion of uracil and 5-phospho-alpha-D-ribose 1-diphosphate (PRPP) to UMP and diphosphate. This chain is Uracil phosphoribosyltransferase, found in Azotobacter vinelandii (strain DJ / ATCC BAA-1303).